A 699-amino-acid chain; its full sequence is Elongation factor G (699 aa).

Positions 8-283 constitute a tr-type G domain; sequence EHIRNIGICA…AVVDFLPSPI (276 aa). Residues 17 to 24, 81 to 85, and 135 to 138 contribute to the GTP site; these read AHIDAGKT, DTPGH, and NKMD.

It belongs to the TRAFAC class translation factor GTPase superfamily. Classic translation factor GTPase family. EF-G/EF-2 subfamily.

The protein localises to the cytoplasm. Its function is as follows. Catalyzes the GTP-dependent ribosomal translocation step during translation elongation. During this step, the ribosome changes from the pre-translocational (PRE) to the post-translocational (POST) state as the newly formed A-site-bound peptidyl-tRNA and P-site-bound deacylated tRNA move to the P and E sites, respectively. Catalyzes the coordinated movement of the two tRNA molecules, the mRNA and conformational changes in the ribosome. The sequence is that of Elongation factor G from Rickettsia helvetica.